A 292-amino-acid chain; its full sequence is S-adenosyl-L-methionine-dependent Diels-Alderase iccD (292 aa).

The helical transmembrane segment at 240-262 (LPVVRMFYVVLLVPYLFVRLLGI) threads the bilayer.

Belongs to the class I-like SAM-binding methyltransferase superfamily. Erg6/SMT family. It depends on S-adenosyl-L-methionine as a cofactor.

Its subcellular location is the membrane. The catalysed reaction is 3-[(2E,4E,8S,10E,12Z)-4,8-dimethyltetradeca-2,4,10,12-tetraenoyl]-4-hydroxy-5-(4-hydroxyphenyl)-1,2-dihydropyridin-2-one = 8-epi-ilicicolin H. Its pathway is mycotoxin biosynthesis. In terms of biological role, S-adenosyl-l-methionine-dependent Diels-Alderase; part of the gene cluster that mediates the biosynthesis of ilicicolin H, a 4-hydroxy-2-pyridonealkaloid that has potent and broad antifungal activities by inhibiting the mitochondrial respiration chain. IccD catalyzes the Diels-Alder reaction that converts the acyclic 2-pyridone intermediate to 8-epi-ilicicolin H. The biosynthesis of ilicicolin H starts with formation of the tetramic acid by the hybrid PKS-NRPS synthetase iccA with the partnering trans-enoyl reductase iccB since iccA lacks a designated enoylreductase (ER) domain. The cytochrome P450 monooxygenase iccC then catalyzes the ring expansion of the tetramate to the acyclic 2-pyridone. The pericyclase iccD further converts the acyclic 2-pyridone into 8-epi-ilicicolin H. Finally, the epimerase iccE converts 8-epi-ilicicolin H into ilicicolin H via epimerization. IccA to iccE are sufficient for ilicicolin H biosynthesis and the roles of the remaining enzymes, iccF, iccG and iccH within the pathway have still to be determined. The polypeptide is S-adenosyl-L-methionine-dependent Diels-Alderase iccD (Talaromyces variabilis (Penicillium variabile)).